Consider the following 249-residue polypeptide: 2,3-bisphosphoglycerate-dependent phosphoglycerate mutase (249 aa).

Substrate-binding positions include 9 to 16 (RHGQSQWN), 22 to 23 (TG), Arg-61, 88 to 91 (ERHY), Lys-99, 115 to 116 (RR), and 184 to 185 (GN). Catalysis depends on His-10, which acts as the Tele-phosphohistidine intermediate. The active-site Proton donor/acceptor is the Glu-88.

This sequence belongs to the phosphoglycerate mutase family. BPG-dependent PGAM subfamily. In terms of assembly, homodimer.

It catalyses the reaction (2R)-2-phosphoglycerate = (2R)-3-phosphoglycerate. Its pathway is carbohydrate degradation; glycolysis; pyruvate from D-glyceraldehyde 3-phosphate: step 3/5. Functionally, catalyzes the interconversion of 2-phosphoglycerate and 3-phosphoglycerate. The protein is 2,3-bisphosphoglycerate-dependent phosphoglycerate mutase of Xylella fastidiosa (strain 9a5c).